The following is a 125-amino-acid chain: Small ribosomal subunit protein uS12 (125 aa).

D89 carries the post-translational modification 3-methylthioaspartic acid. Residues 105-125 (AGVKDRKQARSKYGAKRPKAA) form a disordered region. Basic residues predominate over residues 113 to 125 (ARSKYGAKRPKAA).

The protein belongs to the universal ribosomal protein uS12 family. As to quaternary structure, part of the 30S ribosomal subunit. Contacts proteins S8 and S17. May interact with IF1 in the 30S initiation complex.

With S4 and S5 plays an important role in translational accuracy. Functionally, interacts with and stabilizes bases of the 16S rRNA that are involved in tRNA selection in the A site and with the mRNA backbone. Located at the interface of the 30S and 50S subunits, it traverses the body of the 30S subunit contacting proteins on the other side and probably holding the rRNA structure together. The combined cluster of proteins S8, S12 and S17 appears to hold together the shoulder and platform of the 30S subunit. The protein is Small ribosomal subunit protein uS12 of Methylobacillus flagellatus (strain ATCC 51484 / DSM 6875 / VKM B-1610 / KT).